A 104-amino-acid polypeptide reads, in one-letter code: Circadian clock oscillator protein KaiB (104 aa).

The protein belongs to the KaiB family. The KaiABC complex composition changes during the circadian cycle to control KaiC phosphorylation. Complexes KaiC(6), KaiA(2-4):KaiC(6), KaiB(6):KaiC(6) and KaiC(6):KaiB(6):KaiA(12) are among the most important forms, many form cooperatively. Undergoes a major conformational rearrangment; in the free state forms homotetramers as a dimer of dimers. When bound to the CI domain of KaiC switches to a monomeric thioredoxin-fold (KaiB(fs)). KaiB(fs) binds CikA, leading it to dephosphorylate phospho-RpaA.

Key component of the KaiABC oscillator complex, which constitutes the main circadian regulator in cyanobacteria. Complex composition changes during the circadian cycle to control KaiC phosphorylation. KaiA stimulates KaiC autophosphorylation, while KaiB sequesters KaiA, leading to KaiC autodephosphorylation. Phospho-Ser-431 KaiC accumulation triggers binding of KaiB to form the KaiB(6):KaiC(6) complex, leading to changes in output regulators CikA and SasA. KaiB switches to a thioredoxin-like fold (KaiB(fs)) when bound to KaiC. KaiB(6):KaiC(6) formation exposes a site for KaiA binding that sequesters KaiA from KaiC, making the KaiC(6):KaiB(6):KaiA(12) complex that results in KaiC autodephosphorylation. Functionally, a metamorphic protein which reversibly switches between an inactive tetrameric fold and a rare, thioredoxin-like monomeric fold (KaiB(fs)). KaiB(fs) binds phospho-KaiC, KaiA and CikA. KaiA and CikA compete for binding to KaiB(fs), and KaiB(fs) and SasA compete for binding to KaiC, thus the clock oscillator and output signal pathway are tightly coupled. The chain is Circadian clock oscillator protein KaiB from Picosynechococcus sp. (strain ATCC 27264 / PCC 7002 / PR-6) (Agmenellum quadruplicatum).